The chain runs to 168 residues: Ribosome maturation factor RimM (168 aa).

Residues 92 to 166 form the PRC barrel domain; sequence EDTFYKADLI…RITVDPIEGM (75 aa).

The protein belongs to the RimM family. In terms of assembly, binds ribosomal protein uS19.

The protein localises to the cytoplasm. An accessory protein needed during the final step in the assembly of 30S ribosomal subunit, possibly for assembly of the head region. Essential for efficient processing of 16S rRNA. May be needed both before and after RbfA during the maturation of 16S rRNA. It has affinity for free ribosomal 30S subunits but not for 70S ribosomes. The protein is Ribosome maturation factor RimM of Alkaliphilus metalliredigens (strain QYMF).